The following is a 344-amino-acid chain: Fructose-1,6-bisphosphatase class 1 (344 aa).

4 residues coordinate Mg(2+): E91, D110, L112, and D113. Residues 113–116 (DGSS) and N200 each bind substrate. Residue E272 participates in Mg(2+) binding.

Belongs to the FBPase class 1 family. Homotetramer. Requires Mg(2+) as cofactor.

The protein localises to the cytoplasm. It catalyses the reaction beta-D-fructose 1,6-bisphosphate + H2O = beta-D-fructose 6-phosphate + phosphate. It participates in carbohydrate biosynthesis; Calvin cycle. This chain is Fructose-1,6-bisphosphatase class 1, found in Rhodopseudomonas palustris (strain BisB18).